The following is a 138-amino-acid chain: Large ribosomal subunit protein uL16 (138 aa).

Residues 1 to 13 are compositionally biased toward basic residues; sequence MLQPSRRKFRKEQ. A disordered region spans residues 1 to 20; that stretch reads MLQPSRRKFRKEQKGRNTGV.

It belongs to the universal ribosomal protein uL16 family. Part of the 50S ribosomal subunit.

Binds 23S rRNA and is also seen to make contacts with the A and possibly P site tRNAs. This Leptothrix cholodnii (strain ATCC 51168 / LMG 8142 / SP-6) (Leptothrix discophora (strain SP-6)) protein is Large ribosomal subunit protein uL16.